An 836-amino-acid chain; its full sequence is CUB domain-containing protein 1 (836 aa).

A signal peptide spans 1 to 29; that stretch reads MAGLNCGVSIALLGVLLLGAARLPRGAEA. Residues 30–667 lie on the Extracellular side of the membrane; it reads FEIALPRESN…TLTPRTVDLT (638 aa). Residues N39, N122, N180, N205, N270, N310, and N386 are each glycosylated (N-linked (GlcNAc...) asparagine). The CUB domain maps to 417–544; the sequence is CTDHRYCQRK…VSFIPYFKEE (128 aa). A disulfide bond links C476 and C499. The helical transmembrane segment at 668–688 threads the bilayer; that stretch reads VILIAAVGGGVLLLSALGLII. The Cytoplasmic segment spans residues 689-836; sequence CCVKKKKKKT…NTQEPMEPAE (148 aa). Phosphotyrosine is present on Y734. Residues 776–836 are disordered; that stretch reads PPTICSRAPT…NTQEPMEPAE (61 aa).

Interacts with CDH2/N-cadherin, CDH3/P-cadherin, SDC1/syndecan-1, SDC4/syndecan-4 and the serine protease ST14/MT-SP1. Also interacts with SRC and PRKCG/protein kinase C gamma. Phosphorylated on tyrosine by kinases of the SRC family such as SRC and YES as well as by the protein kinase C gamma/PRKCG. Dephosphorylated by phosphotyrosine phosphatases. Also phosphorylated by suramin, a heparin analog. Tyrosine phosphorylated in response to dissociation of integrin alpha-6 beta-4 from laminin-5. Post-translationally, N-glycosylated. In terms of processing, a soluble form may also be produced by proteolytic cleavage at the cell surface (shedding). Another peptide of 80 kDa (p80) is present in cultured keratinocytes probably due to tryptic cleavage at an unidentified site on its N-terminal side. Converted to p80 by plasmin, a trypsin-like protease. As to expression, highly expressed in mitotic cells with low expression during interphase. Detected at highest levels in skeletal muscle and colon with lower levels in kidney, small intestine, placenta and lung. Up-regulated in a number of human tumor cell lines, as well as in colorectal cancer, breast carcinoma and lung cancer. Also expressed in cells with phenotypes reminiscent of mesenchymal stem cells and neural stem cells.

It is found in the cell membrane. The protein localises to the secreted. May be involved in cell adhesion and cell matrix association. May play a role in the regulation of anchorage versus migration or proliferation versus differentiation via its phosphorylation. May be a novel marker for leukemia diagnosis and for immature hematopoietic stem cell subsets. Belongs to the tetraspanin web involved in tumor progression and metastasis. This chain is CUB domain-containing protein 1 (CDCP1), found in Homo sapiens (Human).